The primary structure comprises 471 residues: 3-isopropylmalate dehydratase large subunit (471 aa).

Positions 347, 407, and 410 each coordinate [4Fe-4S] cluster.

The protein belongs to the aconitase/IPM isomerase family. LeuC type 1 subfamily. In terms of assembly, heterodimer of LeuC and LeuD. Requires [4Fe-4S] cluster as cofactor.

The enzyme catalyses (2R,3S)-3-isopropylmalate = (2S)-2-isopropylmalate. It functions in the pathway amino-acid biosynthesis; L-leucine biosynthesis; L-leucine from 3-methyl-2-oxobutanoate: step 2/4. Functionally, catalyzes the isomerization between 2-isopropylmalate and 3-isopropylmalate, via the formation of 2-isopropylmaleate. The protein is 3-isopropylmalate dehydratase large subunit of Vibrio parahaemolyticus serotype O3:K6 (strain RIMD 2210633).